The following is a 156-amino-acid chain: Ribonuclease pancreatic (156 aa).

Positions 1-28 are cleaved as a signal peptide; it reads MALEKSLVLLPLLVLALLVLGWIQPSLG. Substrate-binding residues include Lys-35 and Arg-38. His-40 serves as the catalytic Proton acceptor. Cystine bridges form between Cys-54/Cys-112, Cys-68/Cys-123, Cys-86/Cys-138, and Cys-93/Cys-100. N-linked (GlcNAc...) asparagine glycosylation is present at Asn-62. 69 to 73 is a binding site for substrate; sequence KPVNT. Asn-90 is a glycosylation site (N-linked (GlcNAc...) asparagine). Residue Lys-94 participates in substrate binding. An N-linked (GlcNAc...) asparagine glycan is attached at Asn-104. Position 113 (Arg-113) interacts with substrate. The active-site Proton donor is His-147.

The protein belongs to the pancreatic ribonuclease family. Monomer. Interacts with and forms tight 1:1 complexes with RNH1. Dimerization of two such complexes may occur. Interaction with RNH1 inhibits this protein.

The protein localises to the secreted. The catalysed reaction is an [RNA] containing cytidine + H2O = an [RNA]-3'-cytidine-3'-phosphate + a 5'-hydroxy-ribonucleotide-3'-[RNA].. It carries out the reaction an [RNA] containing uridine + H2O = an [RNA]-3'-uridine-3'-phosphate + a 5'-hydroxy-ribonucleotide-3'-[RNA].. Endonuclease that catalyzes the cleavage of RNA on the 3' side of pyrimidine nucleotides. Acts on single-stranded and double-stranded RNA. The chain is Ribonuclease pancreatic (RNASE1) from Lemur catta (Ring-tailed lemur).